A 492-amino-acid chain; its full sequence is Malonyl-CoA decarboxylase, mitochondrial (492 aa).

A mitochondrion-targeting transit peptide spans 1-38 (MRGLGPSLRARRLLPLRYPPRPPGPRGPRLCSGLTASA). The tract at residues 39–189 (MDELLRRAVP…VLKSMLSEWF (151 aa)) is alpha-helical domain. The residue at position 58 (lysine 58) is an N6-acetyllysine. Lysine 167 carries the post-translational modification N6-acetyllysine; alternate. Position 167 is an N6-succinyllysine; alternate (lysine 167). The segment at 190-492 (SSGFLNLERV…VAQFQSNSKL (303 aa)) is catalytic domain. Lysine 210 carries the N6-acetyllysine modification. Lysine 221 carries the post-translational modification N6-succinyllysine. 298–304 (QGVELGT) is a malonyl-CoA binding site. N6-acetyllysine is present on lysine 316. Serine 328 serves as a coordination point for malonyl-CoA. Serine 328 serves as the catalytic Proton acceptor. At lysine 385 the chain carries N6-acetyllysine; alternate. N6-succinyllysine; alternate is present on lysine 385. At lysine 388 the chain carries N6-acetyllysine. Histidine 422 contributes to the malonyl-CoA binding site. The active-site Proton donor is histidine 422. N6-acetyllysine is present on residues lysine 441 and lysine 471. The Microbody targeting signal motif lies at 490–492 (SKL).

In terms of assembly, homotetramer. Dimer of dimers. The two subunits within a dimer display conformational differences suggesting that at any given moment, only one of the two subunits is competent for malonyl-CoA binding and catalytic activity. Under oxidizing conditions, can form disulfide-linked homotetramers (in vitro). Associates with the peroxisomal targeting signal receptor PEX5. Post-translationally, acetylation at Lys-471 activates malonyl-CoA decarboxylase activity. Deacetylation at Lys-471 by SIRT4 represses activity, leading to promote lipogenesis. Interchain disulfide bonds may form in peroxisomes (Potential). Interchain disulfide bonds are not expected to form in the reducing environment of the cytoplasm and mitochondria. In terms of tissue distribution, expressed in liver, heart, skeletal muscles and adipose tissues (at protein level). Ubiquitous. Strongly expressed in liver, kidney, heart, skeletal muscle and adipose tissues. Weakly expressed in brain.

The protein localises to the cytoplasm. Its subcellular location is the mitochondrion matrix. The protein resides in the peroxisome. It is found in the peroxisome matrix. It carries out the reaction malonyl-CoA + H(+) = acetyl-CoA + CO2. It functions in the pathway metabolic intermediate biosynthesis; acetyl-CoA biosynthesis; acetyl-CoA from malonyl-CoA: step 1/1. Malonyl-CoA decarboxylase activity does not require any cofactors or divalent metal ions. In terms of biological role, catalyzes the conversion of malonyl-CoA to acetyl-CoA. In the fatty acid biosynthesis MCD selectively removes malonyl-CoA and thus assures that methyl-malonyl-CoA is the only chain elongating substrate for fatty acid synthase and that fatty acids with multiple methyl side chains are produced. In peroxisomes it may be involved in degrading intraperoxisomal malonyl-CoA, which is generated by the peroxisomal beta-oxidation of odd chain-length dicarboxylic fatty acids. Plays a role in the metabolic balance between glucose and lipid oxidation in muscle independent of alterations in insulin signaling. May play a role in controlling the extent of ischemic injury by promoting glucose oxidation. The protein is Malonyl-CoA decarboxylase, mitochondrial of Rattus norvegicus (Rat).